A 232-amino-acid polypeptide reads, in one-letter code: Putative ABC transporter ATP-binding protein VNG_2317G (232 aa).

The region spanning 2 to 231 (LSVRNLVHRY…GALPDAGVRP (230 aa)) is the ABC transporter domain. 34-41 (GANGSGKT) is an ATP binding site.

It belongs to the ABC transporter superfamily.

The protein localises to the cell membrane. Functionally, probably part of an ABC transporter complex. Responsible for energy coupling to the transport system. This is Putative ABC transporter ATP-binding protein VNG_2317G from Halobacterium salinarum (strain ATCC 700922 / JCM 11081 / NRC-1) (Halobacterium halobium).